The primary structure comprises 357 residues: Nicotinate-nucleotide--dimethylbenzimidazole phosphoribosyltransferase (357 aa).

Glu-323 serves as the catalytic Proton acceptor.

Belongs to the CobT family.

The catalysed reaction is 5,6-dimethylbenzimidazole + nicotinate beta-D-ribonucleotide = alpha-ribazole 5'-phosphate + nicotinate + H(+). It functions in the pathway nucleoside biosynthesis; alpha-ribazole biosynthesis; alpha-ribazole from 5,6-dimethylbenzimidazole: step 1/2. Its function is as follows. Catalyzes the synthesis of alpha-ribazole-5'-phosphate from nicotinate mononucleotide (NAMN) and 5,6-dimethylbenzimidazole (DMB). In Nitratidesulfovibrio vulgaris (strain DP4) (Desulfovibrio vulgaris), this protein is Nicotinate-nucleotide--dimethylbenzimidazole phosphoribosyltransferase.